Reading from the N-terminus, the 114-residue chain is Nucleoid-associated protein PCC7424_2224 (114 aa).

This sequence belongs to the YbaB/EbfC family. As to quaternary structure, homodimer.

It is found in the cytoplasm. It localises to the nucleoid. In terms of biological role, binds to DNA and alters its conformation. May be involved in regulation of gene expression, nucleoid organization and DNA protection. This chain is Nucleoid-associated protein PCC7424_2224, found in Gloeothece citriformis (strain PCC 7424) (Cyanothece sp. (strain PCC 7424)).